We begin with the raw amino-acid sequence, 169 residues long: Peptide methionine sulfoxide reductase MsrA (169 aa).

Cys10 is a catalytic residue.

Belongs to the MsrA Met sulfoxide reductase family.

It carries out the reaction L-methionyl-[protein] + [thioredoxin]-disulfide + H2O = L-methionyl-(S)-S-oxide-[protein] + [thioredoxin]-dithiol. The enzyme catalyses [thioredoxin]-disulfide + L-methionine + H2O = L-methionine (S)-S-oxide + [thioredoxin]-dithiol. In terms of biological role, has an important function as a repair enzyme for proteins that have been inactivated by oxidation. Catalyzes the reversible oxidation-reduction of methionine sulfoxide in proteins to methionine. In Streptococcus pyogenes serotype M2 (strain MGAS10270), this protein is Peptide methionine sulfoxide reductase MsrA.